The chain runs to 348 residues: Dihydroorotase (348 aa).

Zn(2+) is bound by residues His17 and His19. Substrate contacts are provided by residues 19-21 (HLR) and Asn45. Residues Lys103, His140, and His178 each contribute to the Zn(2+) site. Position 103 is an N6-carboxylysine (Lys103). Position 140 (His140) interacts with substrate. A substrate-binding site is contributed by Leu223. Asp251 is a binding site for Zn(2+). Asp251 is a catalytic residue. Substrate is bound by residues His255 and Ala267.

It belongs to the metallo-dependent hydrolases superfamily. DHOase family. Class II DHOase subfamily. Homodimer. Requires Zn(2+) as cofactor.

The enzyme catalyses (S)-dihydroorotate + H2O = N-carbamoyl-L-aspartate + H(+). The protein operates within pyrimidine metabolism; UMP biosynthesis via de novo pathway; (S)-dihydroorotate from bicarbonate: step 3/3. Catalyzes the reversible cyclization of carbamoyl aspartate to dihydroorotate. The polypeptide is Dihydroorotase (Salmonella paratyphi B (strain ATCC BAA-1250 / SPB7)).